The sequence spans 147 residues: UPF0310 protein in gntR 5'region (147 aa).

This sequence belongs to the UPF0310 family.

This Bacillus licheniformis protein is UPF0310 protein in gntR 5'region (oug).